The primary structure comprises 701 residues: Polyribonucleotide nucleotidyltransferase (701 aa).

2 residues coordinate Mg(2+): D487 and D493. A KH domain is found at 554–613 (PTMLQMKIDSDKIRDVIGKGGATIRAICEETKASIDIEDDGSVKIYGETKEAAEAAKQRV). The region spanning 623 to 691 (GKIYVGKVER…NRGRIKLSIK (69 aa)) is the S1 motif domain.

The protein belongs to the polyribonucleotide nucleotidyltransferase family. Component of the RNA degradosome, which is a multiprotein complex involved in RNA processing and mRNA degradation. Mg(2+) is required as a cofactor.

Its subcellular location is the cytoplasm. The enzyme catalyses RNA(n+1) + phosphate = RNA(n) + a ribonucleoside 5'-diphosphate. Involved in mRNA degradation. Catalyzes the phosphorolysis of single-stranded polyribonucleotides processively in the 3'- to 5'-direction. In Pseudomonas paraeruginosa (strain DSM 24068 / PA7) (Pseudomonas aeruginosa (strain PA7)), this protein is Polyribonucleotide nucleotidyltransferase.